A 274-amino-acid polypeptide reads, in one-letter code: Thiamine kinase (274 aa).

This sequence belongs to the thiamine kinase family.

The catalysed reaction is thiamine + ATP = thiamine phosphate + ADP + H(+). It functions in the pathway cofactor biosynthesis; thiamine diphosphate biosynthesis; thiamine phosphate from thiamine: step 1/1. Its function is as follows. Catalyzes the ATP-dependent phosphorylation of thiamine to thiamine phosphate. Is involved in thiamine salvage. The chain is Thiamine kinase from Salmonella newport (strain SL254).